We begin with the raw amino-acid sequence, 1032 residues long: UPF0182 protein sll1060 (1032 aa).

9 consecutive transmembrane segments (helical) span residues Trp27–Val49, Trp69–Phe87, Val144–Ile166, Phe197–Leu219, Pro226–Leu248, Trp283–Leu300, His321–Leu339, Leu364–Val386, and Ile406–Trp428.

This sequence belongs to the UPF0182 family.

The protein resides in the cell membrane. In Synechocystis sp. (strain ATCC 27184 / PCC 6803 / Kazusa), this protein is UPF0182 protein sll1060.